The primary structure comprises 207 residues: Ras-related protein RABH1d (207 aa).

16 to 23 is a binding site for GTP; it reads GDQSVGKT. An Effector region motif is present at residues 38 to 46; sequence YQATIGIDF. Residues 64–68, 122–125, and 152–153 each bind GTP; these read DTAGQ, NKTD, and SA. Residues cysteine 205 and cysteine 207 are each lipidated (S-geranylgeranyl cysteine). Position 207 is a cysteine methyl ester (cysteine 207).

It belongs to the small GTPase superfamily. Rab family.

The protein resides in the golgi apparatus membrane. Protein transport. Regulator of membrane traffic from the Golgi apparatus towards the endoplasmic reticulum (ER). The polypeptide is Ras-related protein RABH1d (RABH1D) (Arabidopsis thaliana (Mouse-ear cress)).